The primary structure comprises 414 residues: Serine/threonine transporter SstT (414 aa).

8 helical membrane-spanning segments follow: residues 16-36 (GSLV…AWIS), 46-66 (LGTL…LMLV), 84-104 (ILFL…VFSF), 143-163 (ALLN…GFAL), 180-200 (AVTF…FGLV), 219-239 (LVVL…LLVF), 300-320 (MAGA…TLGV), and 332-352 (VVAS…LLLI).

It belongs to the dicarboxylate/amino acid:cation symporter (DAACS) (TC 2.A.23) family.

Its subcellular location is the cell inner membrane. It carries out the reaction L-serine(in) + Na(+)(in) = L-serine(out) + Na(+)(out). It catalyses the reaction L-threonine(in) + Na(+)(in) = L-threonine(out) + Na(+)(out). Functionally, involved in the import of serine and threonine into the cell, with the concomitant import of sodium (symport system). The sequence is that of Serine/threonine transporter SstT from Salmonella newport (strain SL254).